The chain runs to 338 residues: Lipoate-protein ligase A (338 aa).

Positions 29 to 216 constitute a BPL/LPL catalytic domain; that stretch reads PATQRVLFLW…AFFAHYGERV (188 aa). ATP-binding positions include Arg-71, 76–79, and Lys-134; that span reads GAVF. Lys-134 is a binding site for (R)-lipoate.

Belongs to the LplA family. In terms of assembly, monomer.

It is found in the cytoplasm. The catalysed reaction is L-lysyl-[lipoyl-carrier protein] + (R)-lipoate + ATP = N(6)-[(R)-lipoyl]-L-lysyl-[lipoyl-carrier protein] + AMP + diphosphate + H(+). Its pathway is protein modification; protein lipoylation via exogenous pathway; protein N(6)-(lipoyl)lysine from lipoate: step 1/2. The protein operates within protein modification; protein lipoylation via exogenous pathway; protein N(6)-(lipoyl)lysine from lipoate: step 2/2. Functionally, catalyzes both the ATP-dependent activation of exogenously supplied lipoate to lipoyl-AMP and the transfer of the activated lipoyl onto the lipoyl domains of lipoate-dependent enzymes. The polypeptide is Lipoate-protein ligase A (Escherichia coli O139:H28 (strain E24377A / ETEC)).